A 771-amino-acid chain; its full sequence is Post-GPI attachment to proteins factor 6 (771 aa).

Positions 1–34 (MGRAGTGTGGEAVAAVVAGPLLLLLLARPPPASA) are cleaved as a signal peptide. The Extracellular segment spans residues 35-545 (GYSGKSEVGL…STAQTVAQQR (511 aa)). An N-linked (GlcNAc...) asparagine glycan is attached at Asn-144. The segment at 322–343 (FNASSGLLSPSPDHQDLGRSGR) is disordered. Over residues 334–343 (DHQDLGRSGR) the composition is skewed to basic and acidic residues. 2 N-linked (GlcNAc...) asparagine glycosylation sites follow: Asn-407 and Asn-431. The region spanning 497-533 (PCLNDCGPYGQCLLLRRHSYLYASCSCKAGWRGWSCT) is the EGF-like domain. 3 disulfide bridges follow: Cys-498–Cys-508, Cys-502–Cys-521, and Cys-523–Cys-532. A helical transmembrane segment spans residues 546–566 (AATLLLTLSNLMFLAPIAVSV). The Cytoplasmic portion of the chain corresponds to 567–568 (RR). The chain crosses the membrane as a helical span at residues 569–589 (FFLVEASVYAYTMFFSTFYHA). Residues 590 to 605 (CDQPGEAVLCILSYDT) lie on the Extracellular side of the membrane. A helical transmembrane segment spans residues 606-626 (LQYCDFLGSGAAIWVTILCMA). Residues 627-629 (RLK) are Cytoplasmic-facing. The chain crosses the membrane as a helical span at residues 630-650 (TVLKYVLFLLGTLVIAMSLQL). Topologically, residues 651 to 653 (DRR) are extracellular. A helical membrane pass occupies residues 654 to 674 (GMWNMLGPCLFAFVIMASMWA). Residues 675-690 (YRCGHRRQCYPTSWQR) lie on the Cytoplasmic side of the membrane. Residues 691-711 (WAFYLLPGVSMASVGIAIYTS) traverse the membrane as a helical segment. Residues 712-717 (MMTSDN) are Extracellular-facing. Residues 718–738 (YYYTHSIWHILLAGSAALLLP) traverse the membrane as a helical segment. Residues 739–771 (PPDQPAEPWACSQKFPCHYQICKNDREELYAVT) are Cytoplasmic-facing.

This sequence belongs to the TMEM8 family. In terms of processing, glycosylated. As to expression, expressed in pancreas, placenta, spleen, liver, kidney, bone marrow, peripheral blood leukocytes and tonsil.

The protein localises to the cell membrane. Its subcellular location is the lysosome membrane. It carries out the reaction a 1,2-diacyl-sn-glycero-3-phosphocholine + H2O = a 1-acyl-sn-glycero-3-phosphocholine + a fatty acid + H(+). Involved in the lipid remodeling steps of GPI-anchor maturation. Lipid remodeling steps consist in the generation of 2 saturated fatty chains at the sn-2 position of GPI-anchor proteins (GPI-AP). Has phospholipase A2 activity that removes an acyl-chain at the sn-2 position of GPI-anchors during the remodeling of GPI. Required for the shedding of the GPI-AP CRIPTO, but not CFC1, at the cell surface. Shedding of CRIPTO modulates Nodal signaling by allowing soluble CRIPTO to act as a Nodal coreceptor on other cells. Also indirectly involved in the translocation of RAC1 from the cytosol to the plasma membrane by maintaining the steady state amount of CAV1-enriched plasma membrane subdomains, stabilizing RAC1 at the plasma membrane. In contrast to myomaker (TMEM8C), has no fusogenic activity. In Homo sapiens (Human), this protein is Post-GPI attachment to proteins factor 6.